Consider the following 137-residue polypeptide: DTAPLEKKSHCLSQGLSGLLSLGKLFRDSSWTLSKEELSRGVSQFGLDFSDADVNKLFSDFEKKAAVEAAFKHLDKTGDGVVTVEDIKGVYSAKVVKGEATEEEILKKFLNMFESSTSVDGKVTKKEFLDYYSGLSK.

3 consecutive EF-hand domains span residues 27-48, 62-97, and 100-135; these read RDSS…FGLD, EKKA…KVVK, and ATEE…YSGL.

Monomer or disulfide-linked dimers.

Possibly acts as a regulatory protein and not as a calcium buffer or transport protein. The polypeptide is Crustacean calcium-binding protein 23 (Homarus americanus (American lobster)).